The sequence spans 181 residues: Large ribosomal subunit protein uL5c (181 aa).

This sequence belongs to the universal ribosomal protein uL5 family. Part of the 50S ribosomal subunit; contacts the 5S rRNA.

It is found in the plastid. The protein localises to the chloroplast. In terms of biological role, binds 5S rRNA, forms part of the central protuberance of the 50S subunit. This chain is Large ribosomal subunit protein uL5c (rpl5), found in Heterosigma akashiwo (strain NIES-293 / 8280G21-1).